Here is a 103-residue protein sequence, read N- to C-terminus: Histone H4 (103 aa).

The segment covering 1 to 14 has biased composition (gly residues); it reads MTGRGKGGKGLGKG. Residues 1–20 are disordered; the sequence is MTGRGKGGKGLGKGGAKRHR. An N-acetylthreonine modification is found at Thr-2. Lys-6 carries the post-translational modification N6-acetyl-N6-methyllysine; alternate. 4 positions are modified to N6-acetyllysine: Lys-6, Lys-9, Lys-13, and Lys-17. Position 13 is an N6-acetyl-N6-methyllysine; alternate (Lys-13). Lys-21 is subject to N6,N6-dimethyllysine. Lys-32 bears the N6-methyllysine mark.

The protein belongs to the histone H4 family. As to quaternary structure, the nucleosome is a histone octamer containing two molecules each of H2A, H2B, H3 and H4 assembled in one H3-H4 heterotetramer and two H2A-H2B heterodimers. The octamer wraps approximately 147 bp of DNA.

It localises to the nucleus. It is found in the chromosome. In terms of biological role, core component of nucleosome. Nucleosomes wrap and compact DNA into chromatin, limiting DNA accessibility to the cellular machineries which require DNA as a template. Histones thereby play a central role in transcription regulation, DNA repair, DNA replication and chromosomal stability. DNA accessibility is regulated via a complex set of post-translational modifications of histones, also called histone code, and nucleosome remodeling. Its function is as follows. A mixture of histones H2B and H4 has antimicrobial activity against the Gram-positive bacterium M.luteus. This Penaeus vannamei (Whiteleg shrimp) protein is Histone H4.